A 282-amino-acid chain; its full sequence is Elongation factor Ts (282 aa).

An involved in Mg(2+) ion dislocation from EF-Tu region spans residues 79 to 82 (TDFV).

This sequence belongs to the EF-Ts family.

The protein resides in the cytoplasm. Associates with the EF-Tu.GDP complex and induces the exchange of GDP to GTP. It remains bound to the aminoacyl-tRNA.EF-Tu.GTP complex up to the GTP hydrolysis stage on the ribosome. This Shewanella woodyi (strain ATCC 51908 / MS32) protein is Elongation factor Ts.